The sequence spans 154 residues: Aspartate 1-decarboxylase 1 (154 aa).

The active-site Schiff-base intermediate with substrate; via pyruvic acid is serine 26. Serine 26 carries the post-translational modification Pyruvic acid (Ser). Threonine 58 serves as a coordination point for substrate. The active-site Proton donor is tyrosine 59. 74–76 (GAA) lines the substrate pocket. The tract at residues 129–154 (VGLVRGDTNSPQPSLSEQAGDPRRAQ) is disordered. The span at 135–145 (DTNSPQPSLSE) shows a compositional bias: polar residues.

The protein belongs to the PanD family. In terms of assembly, heterooctamer of four alpha and four beta subunits. Requires pyruvate as cofactor. Post-translationally, is synthesized initially as an inactive proenzyme, which is activated by self-cleavage at a specific serine bond to produce a beta-subunit with a hydroxyl group at its C-terminus and an alpha-subunit with a pyruvoyl group at its N-terminus.

The protein localises to the cytoplasm. The enzyme catalyses L-aspartate + H(+) = beta-alanine + CO2. The protein operates within cofactor biosynthesis; (R)-pantothenate biosynthesis; beta-alanine from L-aspartate: step 1/1. Its function is as follows. Catalyzes the pyruvoyl-dependent decarboxylation of aspartate to produce beta-alanine. This Frankia casuarinae (strain DSM 45818 / CECT 9043 / HFP020203 / CcI3) protein is Aspartate 1-decarboxylase 1.